The chain runs to 233 residues: Purine nucleoside phosphorylase DeoD-type (233 aa).

H4 contributes to the a purine D-ribonucleoside binding site. Phosphate contacts are provided by residues G20, R24, R43, and 87–90 (RIGT). Residues 179-181 (EME) and 203-204 (SD) contribute to the a purine D-ribonucleoside site. D204 serves as the catalytic Proton donor.

Belongs to the PNP/UDP phosphorylase family. In terms of assembly, homohexamer; trimer of homodimers.

It carries out the reaction a purine D-ribonucleoside + phosphate = a purine nucleobase + alpha-D-ribose 1-phosphate. It catalyses the reaction a purine 2'-deoxy-D-ribonucleoside + phosphate = a purine nucleobase + 2-deoxy-alpha-D-ribose 1-phosphate. Functionally, catalyzes the reversible phosphorolytic breakdown of the N-glycosidic bond in the beta-(deoxy)ribonucleoside molecules, with the formation of the corresponding free purine bases and pentose-1-phosphate. This chain is Purine nucleoside phosphorylase DeoD-type, found in Helicobacter pylori (strain ATCC 700392 / 26695) (Campylobacter pylori).